Here is a 317-residue protein sequence, read N- to C-terminus: Apolipoprotein E (317 aa).

An N-terminal signal peptide occupies residues 1-18 (MKVLWAALLVTFLAGCQA). A run of 8 repeats spans residues 80-101 (TLMD…EQLS), 102-123 (PVAE…ARLG), 124-145 (ADME…AMLG), 146-167 (QSTE…KRLL), 168-189 (RDAD…EGAE), 190-211 (RGVS…VRAA), 212-233 (TVGS…ERLR), and 234-255 (ARME…EQVA). Positions 80–255 (TLMDETMKEL…RLDEVKEQVA (176 aa)) are 8 X 22 AA approximate tandem repeats. At Met143 the chain carries Methionine sulfoxide. Ser147 bears the Phosphoserine mark. Residues 158 to 168 (HLRKLRKRLLR) are LDL and other lipoprotein receptors binding. 162–165 (LRKR) is a heparin binding site. The interval 210–290 (AATVGSLAGQ…SWFEPLVEDM (81 aa)) is lipid-binding and lipoprotein association. 229-236 (GERLRARM) lines the heparin pocket. The segment at 266–317 (QQISLQAEAFQARLKSWFEPLVEDMQRQWAGLVEKVQAAVGASTAPVPSDNH) is homooligomerization. The specificity for association with VLDL stretch occupies residues 278 to 290 (RLKSWFEPLVEDM).

Belongs to the apolipoprotein A1/A4/E family. Homotetramer. May interact with ABCA1; functionally associated with ABCA1 in the biogenesis of HDLs. May interact with APP/A4 amyloid-beta peptide; the interaction is extremely stable in vitro but its physiological significance is unclear. May interact with MAPT. May interact with MAP2. In the cerebrospinal fluid, interacts with secreted SORL1. Interacts with PMEL; this allows the loading of PMEL luminal fragment on ILVs to induce fibril nucleation. In terms of processing, APOE exists as multiple glycosylated and sialylated glycoforms within cells and in plasma. The extent of glycosylation and sialylation are tissue and context specific. Glycated in plasma VLDL. Post-translationally, phosphorylated by FAM20C in the extracellular medium.

It localises to the secreted. It is found in the extracellular space. Its subcellular location is the extracellular matrix. The protein localises to the extracellular vesicle. The protein resides in the endosome. It localises to the multivesicular body. In terms of biological role, APOE is an apolipoprotein, a protein associating with lipid particles, that mainly functions in lipoprotein-mediated lipid transport between organs via the plasma and interstitial fluids. APOE is a core component of plasma lipoproteins and is involved in their production, conversion and clearance. Apolipoproteins are amphipathic molecules that interact both with lipids of the lipoprotein particle core and the aqueous environment of the plasma. As such, APOE associates with chylomicrons, chylomicron remnants, very low density lipoproteins (VLDL) and intermediate density lipoproteins (IDL) but shows a preferential binding to high-density lipoproteins (HDL). It also binds a wide range of cellular receptors including the LDL receptor/LDLR, the LDL receptor-related proteins LRP1, LRP2 and LRP8 and the very low-density lipoprotein receptor/VLDLR that mediate the cellular uptake of the APOE-containing lipoprotein particles. Finally, APOE also has a heparin-binding activity and binds heparan-sulfate proteoglycans on the surface of cells, a property that supports the capture and the receptor-mediated uptake of APOE-containing lipoproteins by cells. A main function of APOE is to mediate lipoprotein clearance through the uptake of chylomicrons, VLDLs, and HDLs by hepatocytes. APOE is also involved in the biosynthesis by the liver of VLDLs as well as their uptake by peripheral tissues ensuring the delivery of triglycerides and energy storage in muscle, heart and adipose tissues. By participating in the lipoprotein-mediated distribution of lipids among tissues, APOE plays a critical role in plasma and tissues lipid homeostasis. APOE is also involved in two steps of reverse cholesterol transport, the HDLs-mediated transport of cholesterol from peripheral tissues to the liver, and thereby plays an important role in cholesterol homeostasis. First, it is functionally associated with ABCA1 in the biogenesis of HDLs in tissues. Second, it is enriched in circulating HDLs and mediates their uptake by hepatocytes. APOE also plays an important role in lipid transport in the central nervous system, regulating neuron survival and sprouting. The polypeptide is Apolipoprotein E (APOE) (Colobus guereza (Mantled guereza)).